A 1001-amino-acid chain; its full sequence is Kinesin-like protein KIN-14P (1001 aa).

The Calponin-homology (CH) domain occupies 53–172 (AIRRYEAANW…CVLSLRSFSE (120 aa)). Positions 284–300 (NESVKHALDPNDDKLLS) are enriched in basic and acidic residues. The interval 284-322 (NESVKHALDPNDDKLLSRADTPPEMESTCTCSTGNMDEE) is disordered. Residues 426-748 (NIRVYCRVRP…LKFAERVATV (323 aa)) form the Kinesin motor domain. 509-516 (GQTGSGKT) serves as a coordination point for ATP. A coiled-coil region spans residues 756–784 (NKEGGEVKELKEQIACLKAALAKKDGETE). Disordered regions lie at residues 804–830 (PPAFRNPMEEVGNLETRSNGTPRQKKR) and 890–1001 (EPQW…SAKK). Residues 972 to 984 (PSASTKNGKQLSL) are compositionally biased toward polar residues.

Belongs to the TRAFAC class myosin-kinesin ATPase superfamily. Kinesin family. KIN-14 subfamily.

This is Kinesin-like protein KIN-14P from Oryza sativa subsp. japonica (Rice).